We begin with the raw amino-acid sequence, 524 residues long: Putative UDP-glucuronosyltransferase ugt-56 (524 aa).

The N-terminal stretch at 1–20 (MLWAFIVWLGALCIYGSAFD) is a signal peptide. N125, N277, and N335 each carry an N-linked (GlcNAc...) asparagine glycan. Residues 488-508 (LIDSSIALVFMLFIFVFVNHF) form a helical membrane-spanning segment.

This sequence belongs to the UDP-glycosyltransferase family.

It localises to the membrane. The enzyme catalyses glucuronate acceptor + UDP-alpha-D-glucuronate = acceptor beta-D-glucuronoside + UDP + H(+). The sequence is that of Putative UDP-glucuronosyltransferase ugt-56 (ugt-56) from Caenorhabditis elegans.